Reading from the N-terminus, the 121-residue chain is Small ribosomal subunit protein uS13 (121 aa).

A disordered region spans residues 91–121; the sequence is HRRGLPVRGQKTKNNARTRKGPVKTVANKKK.

This sequence belongs to the universal ribosomal protein uS13 family. Part of the 30S ribosomal subunit. Forms a loose heterodimer with protein S19. Forms two bridges to the 50S subunit in the 70S ribosome.

In terms of biological role, located at the top of the head of the 30S subunit, it contacts several helices of the 16S rRNA. In the 70S ribosome it contacts the 23S rRNA (bridge B1a) and protein L5 of the 50S subunit (bridge B1b), connecting the 2 subunits; these bridges are implicated in subunit movement. Contacts the tRNAs in the A and P-sites. The sequence is that of Small ribosomal subunit protein uS13 from Staphylococcus aureus (strain Mu3 / ATCC 700698).